The sequence spans 300 residues: Cation-efflux pump FieF (300 aa).

4 consecutive transmembrane segments (helical) span residues 12 to 32 (AALAATLVATLLLIIKIFAWW), 39 to 59 (ILAALVDSLVDIAASLTNLLV), 82 to 102 (AALAQSMFISGSALFLFLTGI), and 114 to 134 (PLVGIVVTVAALVTTLMLVTF). The Zn(2+) site is built by aspartate 45 and aspartate 49. Residues histidine 153 and aspartate 157 each coordinate Zn(2+). Transmembrane regions (helical) follow at residues 156-176 (SDVMMNGAILVALALSWYGLH) and 182-202 (FALGIGVWILYSALRMGYEAI).

This sequence belongs to the cation diffusion facilitator (CDF) transporter (TC 2.A.4) family. FieF subfamily. In terms of assembly, homodimer.

It localises to the cell inner membrane. It carries out the reaction Zn(2+)(in) + H(+)(out) = Zn(2+)(out) + H(+)(in). It catalyses the reaction Cd(2+)(in) + H(+)(out) = Cd(2+)(out) + H(+)(in). The catalysed reaction is Fe(2+)(in) + H(+)(out) = Fe(2+)(out) + H(+)(in). Its function is as follows. Divalent metal cation transporter which exports Zn(2+), Cd(2+) and possibly Fe(2+). May be involved in zinc and iron detoxification by efflux. This Cronobacter sakazakii (strain ATCC BAA-894) (Enterobacter sakazakii) protein is Cation-efflux pump FieF.